The following is a 399-amino-acid chain: MKPYDLPDARGHFGPYGGVFVAETLMHALDELRAAYDQCRVDPSFIDEFNYELKHFVGRPSPVYHASRWSQRLGGAQIWFKREDLNHTGAHKVNNCIGQALLARRMGKPRVIAETGAGQHGVATATVAARYGMECVVFMGSEDVRRQASNVYRMKLLGATVVPVDSGSCTLKDALNEAMRDWVTNIENTFYIIGTVAGPDPYPRMVRDFQTVIGQECLTQMPEVIGRQPDYVVAAVGGGSNAMGIFHPYIPYENVRLIGVEAAGEGMETGRHAASLAAGQIGVLHGNRTYVMQNADGQVQETHSVSAGLDYPGVGPEHAWLKDSGRAEYAGITDDEALAAFHDCCRIEGIMPALESAHAIAQAVKMTPALSKDKVILVNLSGRGDKDMHTVAERAGLQL.

Lys-92 is modified (N6-(pyridoxal phosphate)lysine).

The protein belongs to the TrpB family. Tetramer of two alpha and two beta chains. Pyridoxal 5'-phosphate serves as cofactor.

It catalyses the reaction (1S,2R)-1-C-(indol-3-yl)glycerol 3-phosphate + L-serine = D-glyceraldehyde 3-phosphate + L-tryptophan + H2O. It participates in amino-acid biosynthesis; L-tryptophan biosynthesis; L-tryptophan from chorismate: step 5/5. Functionally, the beta subunit is responsible for the synthesis of L-tryptophan from indole and L-serine. This Bordetella pertussis (strain Tohama I / ATCC BAA-589 / NCTC 13251) protein is Tryptophan synthase beta chain.